We begin with the raw amino-acid sequence, 452 residues long: Phosphoglucosamine mutase (452 aa).

The active-site Phosphoserine intermediate is Ser104. The Mg(2+) site is built by Ser104, Asp246, Asp248, and Asp250. A Phosphoserine modification is found at Ser104.

This sequence belongs to the phosphohexose mutase family. The cofactor is Mg(2+). Post-translationally, activated by phosphorylation.

It carries out the reaction alpha-D-glucosamine 1-phosphate = D-glucosamine 6-phosphate. Functionally, catalyzes the conversion of glucosamine-6-phosphate to glucosamine-1-phosphate. The chain is Phosphoglucosamine mutase from Streptomyces coelicolor (strain ATCC BAA-471 / A3(2) / M145).